The chain runs to 256 residues: Probable elongation factor 1-delta (256 aa).

3 positions are modified to phosphoserine: Ser-37, Ser-53, and Ser-89. The interval 110–146 (NGVSKEPEVEAKKPEANDDDDDVDLFGSDSEEEDGEA) is disordered. Basic and acidic residues predominate over residues 114–125 (KEPEVEAKKPEA). Positions 126–144 (NDDDDDVDLFGSDSEEEDG) are enriched in acidic residues. Residues Ser-137 and Ser-139 each carry the phosphoserine modification.

The protein belongs to the EF-1-beta/EF-1-delta family. EF-1 is composed of 4 subunits: alpha, beta, delta, and gamma.

EF-1-beta and EF-1-delta stimulate the exchange of GDP bound to EF-1-alpha to GTP. The protein is Probable elongation factor 1-delta (eEF1delta) of Drosophila melanogaster (Fruit fly).